A 175-amino-acid chain; its full sequence is Large ribosomal subunit protein eL14 (175 aa).

The tract at residues K150 to K175 is disordered. Over residues A152–K161 the composition is skewed to basic and acidic residues. Residues R162–K175 are compositionally biased toward basic residues.

The protein belongs to the eukaryotic ribosomal protein eL14 family.

In terms of biological role, component of the large ribosomal subunit. The ribosome is a large ribonucleoprotein complex responsible for the synthesis of proteins in the cell. The chain is Large ribosomal subunit protein eL14 (RPL14) from Leishmania donovani.